Consider the following 370-residue polypeptide: Cytochrome b (370 aa).

4 helical membrane passes run Phe30–Phe50, Trp74–Phe96, Val109–Val129, and Phe175–Ile195. Heme b is bound by residues His80 and His94. Positions 179 and 193 each coordinate heme b. A ubiquinone is bound at residue His198. 4 consecutive transmembrane segments (helical) span residues Tyr221–Leu240, Val284–Asn304, Phe316–Val336, and Ile342–Phe362.

This sequence belongs to the cytochrome b family. As to quaternary structure, the main subunits of complex b-c1 are: cytochrome b, cytochrome c1 and the Rieske protein. It depends on heme b as a cofactor.

The protein localises to the mitochondrion inner membrane. Its function is as follows. Component of the ubiquinol-cytochrome c reductase complex (complex III or cytochrome b-c1 complex) that is part of the mitochondrial respiratory chain. The b-c1 complex mediates electron transfer from ubiquinol to cytochrome c. Contributes to the generation of a proton gradient across the mitochondrial membrane that is then used for ATP synthesis. The sequence is that of Cytochrome b from Caenorhabditis elegans.